The chain runs to 440 residues: L-gulonolactone oxidase (440 aa).

Residues 17–187 (YGCCPEMYFQ…LTVTLQCVPQ (171 aa)) enclose the FAD-binding PCMH-type domain. A Pros-8alpha-FAD histidine modification is found at H54. The helical transmembrane segment at 253–273 (FYLLEFLLWISTFLPGLVGWI) threads the bilayer.

It belongs to the oxygen-dependent FAD-linked oxidoreductase family. The cofactor is FAD.

It localises to the microsome membrane. The protein resides in the endoplasmic reticulum membrane. It catalyses the reaction L-gulono-1,4-lactone + O2 = L-ascorbate + H2O2 + H(+). It participates in cofactor biosynthesis; L-ascorbate biosynthesis via UDP-alpha-D-glucuronate pathway; L-ascorbate from UDP-alpha-D-glucuronate: step 4/4. Functionally, oxidizes L-gulono-1,4-lactone to hydrogen peroxide and L-xylo-hexulonolactone which spontaneously isomerizes to L-ascorbate. The polypeptide is L-gulonolactone oxidase (GULO) (Bos taurus (Bovine)).